The primary structure comprises 148 residues: Deoxyuridine 5'-triphosphate nucleotidohydrolase (148 aa).

Substrate is bound by residues 68–70 (RSG), Asn-81, 85–87 (TID), and Lys-95.

Belongs to the dUTPase family. Mg(2+) serves as cofactor.

It carries out the reaction dUTP + H2O = dUMP + diphosphate + H(+). Its pathway is pyrimidine metabolism; dUMP biosynthesis; dUMP from dCTP (dUTP route): step 2/2. Functionally, this enzyme is involved in nucleotide metabolism: it produces dUMP, the immediate precursor of thymidine nucleotides and it decreases the intracellular concentration of dUTP so that uracil cannot be incorporated into DNA. The sequence is that of Deoxyuridine 5'-triphosphate nucleotidohydrolase from Rickettsia canadensis (strain McKiel).